The following is a 202-amino-acid chain: Imidazoleglycerol-phosphate dehydratase (202 aa).

Belongs to the imidazoleglycerol-phosphate dehydratase family.

It localises to the cytoplasm. The enzyme catalyses D-erythro-1-(imidazol-4-yl)glycerol 3-phosphate = 3-(imidazol-4-yl)-2-oxopropyl phosphate + H2O. It functions in the pathway amino-acid biosynthesis; L-histidine biosynthesis; L-histidine from 5-phospho-alpha-D-ribose 1-diphosphate: step 6/9. This Rhizobium etli (strain ATCC 51251 / DSM 11541 / JCM 21823 / NBRC 15573 / CFN 42) protein is Imidazoleglycerol-phosphate dehydratase.